A 520-amino-acid polypeptide reads, in one-letter code: 2-isopropylmalate synthase (520 aa).

Residues 12-274 (IRIFDTTLRD…DSAINTPRIV (263 aa)) form the Pyruvate carboxyltransferase domain. Mn(2+) contacts are provided by Asp21, His209, His211, and Asn245. The interval 396–520 (RLASMTISDV…VVAGKTAAVA (125 aa)) is regulatory domain.

Belongs to the alpha-IPM synthase/homocitrate synthase family. LeuA type 1 subfamily. Homodimer. The cofactor is Mn(2+).

The protein resides in the cytoplasm. The catalysed reaction is 3-methyl-2-oxobutanoate + acetyl-CoA + H2O = (2S)-2-isopropylmalate + CoA + H(+). The protein operates within amino-acid biosynthesis; L-leucine biosynthesis; L-leucine from 3-methyl-2-oxobutanoate: step 1/4. Catalyzes the condensation of the acetyl group of acetyl-CoA with 3-methyl-2-oxobutanoate (2-ketoisovalerate) to form 3-carboxy-3-hydroxy-4-methylpentanoate (2-isopropylmalate). The polypeptide is 2-isopropylmalate synthase (Xanthomonas euvesicatoria pv. vesicatoria (strain 85-10) (Xanthomonas campestris pv. vesicatoria)).